Reading from the N-terminus, the 235-residue chain is Eukaryotic translation initiation factor 4E-1 (235 aa).

The interval 1–36 is disordered; that stretch reads MVVEETIKATSTEDLSNTIANQNPRGRGGDEDEELE. Residues 8–24 are compositionally biased toward polar residues; sequence KATSTEDLSNTIANQNP. EIF4G-binding regions lie at residues 60-63 and 70-106; these read HPLE and FDNP…NNIH. MRNA contacts are provided by residues 78 to 83, K110, and 128 to 129; these read KQATWG and WE. Residues C133 and C171 are joined by a disulfide bond. The EIF4G-binding stretch occupies residues 154–163; it reads YTLLAMIGEQ. Residues 178–183 and 223–227 each bind mRNA; these read RSGQDK and KKFDR.

It belongs to the eukaryotic initiation factor 4E family. As to quaternary structure, EIF4F is a multi-subunit complex, the composition of which varies with external and internal environmental conditions. It is composed of at least EIF4A, EIF4E and EIF4G. EIF4E is also known to interact with other partners. In higher plants two isoforms of EIF4F have been identified, named isoform EIF4F and isoform EIF(iso)4F. Isoform EIF4F has subunits p220 and p26, whereas isoform EIF(iso)4F has subunits p82 and p28. In terms of assembly, (Microbial infection) Interacts with potyvirus viral genome-linked protein (VPg); this interaction is possible in susceptible hosts but impaired in resistant plants. In terms of processing, according to the redox status, the Cys-133-Cys-171 disulfide bridge may have a role in regulating protein function by affecting its ability to bind capped mRNA.

The protein resides in the nucleus. It localises to the cytoplasm. Functionally, component of the protein complex eIF4F, which is involved in the recognition of the mRNA cap, ATP-dependent unwinding of 5'-terminal secondary structure and recruitment of mRNA to the ribosome. Recognizes and binds the 7-methylguanosine-containing mRNA cap during an early step in the initiation of protein synthesis and facilitates ribosome binding by inducing the unwinding of the mRNAs secondary structures. Key component of recessive resistance to potyviruses. (Microbial infection) Susceptibility host factor required for viral infection by recruiting viral RNAs to the host ribosomal complex via an interaction with viral genome-linked protein (VPg). This Citrullus lanatus (Watermelon) protein is Eukaryotic translation initiation factor 4E-1.